The following is a 316-amino-acid chain: Tyrosine recombinase XerC (316 aa).

Positions 11 to 97 (SGLRKPLDQF…SLRSFFDFLI (87 aa)) constitute a Core-binding (CB) domain. The Tyr recombinase domain maps to 118-298 (PLPKNLDVDE…DFQHLADVYD (181 aa)). Residues Arg157, Lys181, His250, Arg253, and His276 contribute to the active site. Tyr285 functions as the O-(3'-phospho-DNA)-tyrosine intermediate in the catalytic mechanism.

Belongs to the 'phage' integrase family. XerC subfamily. Forms a cyclic heterotetrameric complex composed of two molecules of XerC and two molecules of XerD.

Its subcellular location is the cytoplasm. Functionally, site-specific tyrosine recombinase, which acts by catalyzing the cutting and rejoining of the recombining DNA molecules. The XerC-XerD complex is essential to convert dimers of the bacterial chromosome into monomers to permit their segregation at cell division. It also contributes to the segregational stability of plasmids. The sequence is that of Tyrosine recombinase XerC from Vibrio vulnificus (strain CMCP6).